The primary structure comprises 266 residues: Undecaprenyl-diphosphatase (266 aa).

8 helical membrane-spanning segments follow: residues 1–21 (MEFF…FIPI), 39–59 (PGSS…FWYF), 87–107 (IFIG…FVPG), 117–137 (LSIA…DIST), 153–173 (YIGI…GATI), 189–209 (FSFL…FFSA), 216–236 (FPFL…LLAI), and 246–266 (HGLK…LFNL).

It belongs to the UppP family.

Its subcellular location is the cell inner membrane. It carries out the reaction di-trans,octa-cis-undecaprenyl diphosphate + H2O = di-trans,octa-cis-undecaprenyl phosphate + phosphate + H(+). Its function is as follows. Catalyzes the dephosphorylation of undecaprenyl diphosphate (UPP). Confers resistance to bacitracin. The chain is Undecaprenyl-diphosphatase from Prochlorococcus marinus subsp. pastoris (strain CCMP1986 / NIES-2087 / MED4).